Reading from the N-terminus, the 255-residue chain is 5'-nucleotidase SurE (255 aa).

4 residues coordinate a divalent metal cation: Asp-13, Asp-14, Ser-44, and Asn-100.

It belongs to the SurE nucleotidase family. A divalent metal cation serves as cofactor.

The protein resides in the cytoplasm. The enzyme catalyses a ribonucleoside 5'-phosphate + H2O = a ribonucleoside + phosphate. In terms of biological role, nucleotidase that shows phosphatase activity on nucleoside 5'-monophosphates. This chain is 5'-nucleotidase SurE, found in Bacteroides fragilis (strain ATCC 25285 / DSM 2151 / CCUG 4856 / JCM 11019 / LMG 10263 / NCTC 9343 / Onslow / VPI 2553 / EN-2).